The sequence spans 119 residues: ATP-dependent Clp protease adapter protein ClpS (119 aa).

This sequence belongs to the ClpS family. As to quaternary structure, binds to the N-terminal domain of the chaperone ClpA.

Involved in the modulation of the specificity of the ClpAP-mediated ATP-dependent protein degradation. In Marinobacter nauticus (strain ATCC 700491 / DSM 11845 / VT8) (Marinobacter aquaeolei), this protein is ATP-dependent Clp protease adapter protein ClpS.